Reading from the N-terminus, the 380-residue chain is MSTKDWAEKDYYKILGVSKDAKPEEIKKAFRKIARDNHPDSHPGDKAAEARFKEASEANDVLSNAKKRKEYDQARSLFGSAGGFRFPRGGAQTSVNVEDFLRTASNGDGFGDLFGNLFGASGGRRTASRSPRRGADVEGETTISFDDAVSGTTVTMDMVSQAPCQACRGTGARAGTVPRVCSTCQGSGMHASSAGGVFEMTEPCPDCHGRGMIVEDPCQVCHGSGRAKSTKSMQTRIPAGVEDGQRIRIKGKGSPGENGGKAGDLYVKVTVRPHEIFGRDGHNLTVTVPVTFPEATLGAEVEVPTLAGTTVRLRIPAGTPNGRTFRVRGRGVPRSDGSRGDLLATVEIAVPESLDDDARHVVERLRDSLPQATPRPWEVK.

The 66-residue stretch at 10–75 (DYYKILGVSK…KKRKEYDQAR (66 aa)) folds into the J domain. Residues 32-56 (KIARDNHPDSHPGDKAAEARFKEAS) show a composition bias toward basic and acidic residues. The segment at 32 to 63 (KIARDNHPDSHPGDKAAEARFKEASEANDVLS) is disordered. The CR-type zinc finger occupies 151–230 (GTTVTMDMVS…CHGSGRAKST (80 aa)). Residues Cys-164, Cys-167, Cys-181, Cys-184, Cys-204, Cys-207, Cys-218, and Cys-221 each contribute to the Zn(2+) site. CXXCXGXG motif repeat units follow at residues 164–171 (CQACRGTG), 181–188 (CSTCQGSG), 204–211 (CPDCHGRG), and 218–225 (CQVCHGSG).

It belongs to the DnaJ family. In terms of assembly, homodimer. It depends on Zn(2+) as a cofactor.

Its subcellular location is the cytoplasm. In terms of biological role, participates actively in the response to hyperosmotic and heat shock by preventing the aggregation of stress-denatured proteins and by disaggregating proteins, also in an autonomous, DnaK-independent fashion. Unfolded proteins bind initially to DnaJ; upon interaction with the DnaJ-bound protein, DnaK hydrolyzes its bound ATP, resulting in the formation of a stable complex. GrpE releases ADP from DnaK; ATP binding to DnaK triggers the release of the substrate protein, thus completing the reaction cycle. Several rounds of ATP-dependent interactions between DnaJ, DnaK and GrpE are required for fully efficient folding. Also involved, together with DnaK and GrpE, in the DNA replication of plasmids through activation of initiation proteins. This chain is Chaperone protein DnaJ 2, found in Cutibacterium acnes (strain DSM 16379 / KPA171202) (Propionibacterium acnes).